Here is a 225-residue protein sequence, read N- to C-terminus: MAKKEESVKLLGFWISPFSRRVEMALKLKGVPYEYLEEDLPKKSTLLLELNPVHKKVPVLVHNDKLLSESHVILEYIDQTWNNNPILPHDPYEKAMVRFWAKFVDEQILPVGFMPLVKAEKGIDVAIEEIREMLMFLEKEVTGKDFFGGKTIGFLDMVAGSMIPFCLARAWECLGIDMTPEDTFPELNRWIKNLNEVEIVRECIPPKEKHIERMKKIIERAKSTF.

The region spanning 6–85 (ESVKLLGFWI…YIDQTWNNNP (80 aa)) is the GST N-terminal domain. Glutathione-binding positions include 16–17 (SP), 42–43 (KK), 56–57 (KV), and 69–70 (ES). Positions 90 to 217 (DPYEKAMVRF…EKHIERMKKI (128 aa)) constitute a GST C-terminal domain. The residue at position 151 (threonine 151) is a Phosphothreonine.

It belongs to the GST superfamily. Tau family.

Its subcellular location is the cytoplasm. The protein resides in the cytosol. The enzyme catalyses RX + glutathione = an S-substituted glutathione + a halide anion + H(+). Functionally, may be involved in the conjugation of reduced glutathione to a wide number of exogenous and endogenous hydrophobic electrophiles and have a detoxification role against certain herbicides. This Arabidopsis thaliana (Mouse-ear cress) protein is Glutathione S-transferase U2 (GSTU2).